We begin with the raw amino-acid sequence, 164 residues long: UPF0114 protein KPK_0696 (164 aa).

The next 4 membrane-spanning stretches (helical) occupy residues 15–35 (LLAPVYFGLSLGLVALTIKFF), 53–73 (LILTLLSLVDMTLVGGLLVMV), 109–126 (VAASIVAISSIHLLRVFM), and 136–156 (LMWYVIIHLTFVLSAFVMGYL).

This sequence belongs to the UPF0114 family.

The protein localises to the cell membrane. The chain is UPF0114 protein KPK_0696 from Klebsiella pneumoniae (strain 342).